We begin with the raw amino-acid sequence, 122 residues long: Large ribosomal subunit protein uL14 (122 aa).

The protein belongs to the universal ribosomal protein uL14 family. In terms of assembly, part of the 50S ribosomal subunit. Forms a cluster with proteins L3 and L19. In the 70S ribosome, L14 and L19 interact and together make contacts with the 16S rRNA in bridges B5 and B8.

Binds to 23S rRNA. Forms part of two intersubunit bridges in the 70S ribosome. This Xanthomonas axonopodis pv. citri (strain 306) protein is Large ribosomal subunit protein uL14.